The primary structure comprises 363 residues: RNA polymerase II holoenzyme cyclin-like subunit (363 aa).

Positions 53–143 constitute a Cyclin N-terminal domain; the sequence is YQMLRLAKNL…IGECEFWLIS (91 aa). A disordered region spans residues 252-312; the sequence is TPGGSGSPAM…SPQKEKSKLQ (61 aa). Polar residues predominate over residues 265-276; that stretch reads IQQNPPNQAYQL. Over residues 277–298 the composition is skewed to low complexity; sequence TPQQQEMFRQQQMQQQNRQPET. The span at 299–310 shows a compositional bias: basic and acidic residues; sequence QAKDSPQKEKSK.

This sequence belongs to the cyclin family. Cyclin C subfamily. As to quaternary structure, component of the SRB8-11 complex, a regulatory module of the Mediator complex.

Its subcellular location is the nucleus. Component of the SRB8-11 complex. The SRB8-11 complex is a regulatory module of the Mediator complex which is itself involved in regulation of basal and activated RNA polymerase II-dependent transcription. The SRB8-11 complex may be involved in the transcriptional repression of a subset of genes regulated by Mediator. It may inhibit the association of the Mediator complex with RNA polymerase II to form the holoenzyme complex. The SRB8-11 complex phosphorylates the C-terminal domain (CTD) of the largest subunit of RNA polymerase II. The protein is RNA polymerase II holoenzyme cyclin-like subunit (SSN8) of Pyricularia oryzae (strain 70-15 / ATCC MYA-4617 / FGSC 8958) (Rice blast fungus).